Consider the following 201-residue polypeptide: MEKFTVVNSVAAPLKIINVDTDMIIPKQYLKTIKRTGLGKGLFSEQRYKEDGSENPDFVLNKPAYRNAQILVAGDNFGCGSSREHAPWALADFGIRCVISTSFGDIFYNNSFKNGLLPIRVTHEQLDKLFEDAERGANATLTIDLEKQEIRGPDGGVINFEIDPFRKHCLLNGLDDIGLTMQKKPSIDSFEAREKVARPWL.

Belongs to the LeuD family. LeuD type 1 subfamily. As to quaternary structure, heterodimer of LeuC and LeuD.

The enzyme catalyses (2R,3S)-3-isopropylmalate = (2S)-2-isopropylmalate. It functions in the pathway amino-acid biosynthesis; L-leucine biosynthesis; L-leucine from 3-methyl-2-oxobutanoate: step 2/4. Its function is as follows. Catalyzes the isomerization between 2-isopropylmalate and 3-isopropylmalate, via the formation of 2-isopropylmaleate. The chain is 3-isopropylmalate dehydratase small subunit from Afipia carboxidovorans (strain ATCC 49405 / DSM 1227 / KCTC 32145 / OM5) (Oligotropha carboxidovorans).